Here is a 300-residue protein sequence, read N- to C-terminus: NAD kinase (300 aa).

Asp78 serves as the catalytic Proton acceptor. NAD(+) is bound by residues 78 to 79, 152 to 153, His163, Arg180, Asp182, and 193 to 198; these read DG, ND, and TAYALS.

This sequence belongs to the NAD kinase family. A divalent metal cation is required as a cofactor.

It is found in the cytoplasm. The enzyme catalyses NAD(+) + ATP = ADP + NADP(+) + H(+). Its function is as follows. Involved in the regulation of the intracellular balance of NAD and NADP, and is a key enzyme in the biosynthesis of NADP. Catalyzes specifically the phosphorylation on 2'-hydroxyl of the adenosine moiety of NAD to yield NADP. This chain is NAD kinase, found in Alcanivorax borkumensis (strain ATCC 700651 / DSM 11573 / NCIMB 13689 / SK2).